Consider the following 131-residue polypeptide: UPF0146 protein PYRAB01940 (131 aa).

Belongs to the UPF0146 family.

The sequence is that of UPF0146 protein PYRAB01940 from Pyrococcus abyssi (strain GE5 / Orsay).